A 389-amino-acid chain; its full sequence is Lipid-A-disaccharide synthase (389 aa).

This sequence belongs to the LpxB family.

The enzyme catalyses a lipid X + a UDP-2-N,3-O-bis[(3R)-3-hydroxyacyl]-alpha-D-glucosamine = a lipid A disaccharide + UDP + H(+). Its pathway is bacterial outer membrane biogenesis; LPS lipid A biosynthesis. In terms of biological role, condensation of UDP-2,3-diacylglucosamine and 2,3-diacylglucosamine-1-phosphate to form lipid A disaccharide, a precursor of lipid A, a phosphorylated glycolipid that anchors the lipopolysaccharide to the outer membrane of the cell. This Burkholderia vietnamiensis (strain G4 / LMG 22486) (Burkholderia cepacia (strain R1808)) protein is Lipid-A-disaccharide synthase.